Reading from the N-terminus, the 144-residue chain is MIALIQRVSHAKVEVGQNIVGQIGQGLLVLLGVEKDDDRSKADKLAEKVLNYRIFTDENGKMNLNLQQIGGEILIVSQFTLAADTQKGLRPSFSKGADPELAEKLYQYFSQKCAEKVRVANGQFAADMQVSLTNDGPVTFWLNV.

The Gly-cisPro motif, important for rejection of L-amino acids signature appears at 136–137 (GP).

It belongs to the DTD family. As to quaternary structure, homodimer.

The protein localises to the cytoplasm. It carries out the reaction glycyl-tRNA(Ala) + H2O = tRNA(Ala) + glycine + H(+). It catalyses the reaction a D-aminoacyl-tRNA + H2O = a tRNA + a D-alpha-amino acid + H(+). An aminoacyl-tRNA editing enzyme that deacylates mischarged D-aminoacyl-tRNAs. Also deacylates mischarged glycyl-tRNA(Ala), protecting cells against glycine mischarging by AlaRS. Acts via tRNA-based rather than protein-based catalysis; rejects L-amino acids rather than detecting D-amino acids in the active site. By recycling D-aminoacyl-tRNA to D-amino acids and free tRNA molecules, this enzyme counteracts the toxicity associated with the formation of D-aminoacyl-tRNA entities in vivo and helps enforce protein L-homochirality. In Histophilus somni (strain 129Pt) (Haemophilus somnus), this protein is D-aminoacyl-tRNA deacylase.